Here is a 186-residue protein sequence, read N- to C-terminus: Ribosome-recycling factor (186 aa).

2 stretches are compositionally biased toward basic and acidic residues: residues 134–169 (RDAN…KKAE) and 176–186 (AKAREAEVMED). The disordered stretch occupies residues 134 to 186 (RDANKAAETAEKDKEMTEDDRDKTKDQVQELTKKAETNVNESAKAREAEVMED).

It belongs to the RRF family.

It is found in the cytoplasm. Its function is as follows. Responsible for the release of ribosomes from messenger RNA at the termination of protein biosynthesis. May increase the efficiency of translation by recycling ribosomes from one round of translation to another. The chain is Ribosome-recycling factor from Rhodopirellula baltica (strain DSM 10527 / NCIMB 13988 / SH1).